The chain runs to 84 residues: MYYRRQGEPQEMYGNGNNSVSSSAVNTYQPYYKEDFNILDPALSDSQRYIIYAIVAAILLLLFWLLYKKYGHKIGRKGSVSMFY.

A disordered region spans residues 1–21 (MYYRRQGEPQEMYGNGNNSVS). The helical transmembrane segment at 49–69 (YIIYAIVAAILLLLFWLLYKK) threads the bilayer.

It is found in the membrane. This is an uncharacterized protein from Invertebrate iridescent virus 6 (IIV-6).